The sequence spans 414 residues: Serine hydroxymethyltransferase (414 aa).

(6S)-5,6,7,8-tetrahydrofolate contacts are provided by residues Leu-121 and 125-127; that span reads GHL. N6-(pyridoxal phosphate)lysine is present on Lys-229.

The protein belongs to the SHMT family. Homodimer. Pyridoxal 5'-phosphate serves as cofactor.

It localises to the cytoplasm. The catalysed reaction is (6R)-5,10-methylene-5,6,7,8-tetrahydrofolate + glycine + H2O = (6S)-5,6,7,8-tetrahydrofolate + L-serine. Its pathway is one-carbon metabolism; tetrahydrofolate interconversion. It functions in the pathway amino-acid biosynthesis; glycine biosynthesis; glycine from L-serine: step 1/1. Catalyzes the reversible interconversion of serine and glycine with tetrahydrofolate (THF) serving as the one-carbon carrier. This reaction serves as the major source of one-carbon groups required for the biosynthesis of purines, thymidylate, methionine, and other important biomolecules. Also exhibits THF-independent aldolase activity toward beta-hydroxyamino acids, producing glycine and aldehydes, via a retro-aldol mechanism. The chain is Serine hydroxymethyltransferase from Polaromonas sp. (strain JS666 / ATCC BAA-500).